A 296-amino-acid polypeptide reads, in one-letter code: Regulatory protein PchR (296 aa).

An HTH araC/xylS-type domain is found at 201–296 (HAARDLLVGA…RYGISPSEIR (96 aa)). 2 consecutive DNA-binding regions (H-T-H motif) follow at residues 218–239 (DTLA…RKVF) and 266–288 (VSTV…RKRY).

Positive activator of the genes for pyochelin and ferripyochelin receptors. The chain is Regulatory protein PchR (pchR) from Pseudomonas aeruginosa (strain ATCC 15692 / DSM 22644 / CIP 104116 / JCM 14847 / LMG 12228 / 1C / PRS 101 / PAO1).